Consider the following 219-residue polypeptide: Factor in the germline alpha (219 aa).

The region spanning glutamate 65–leucine 117 is the bHLH domain. Residues alanine 124–glutamine 151 are disordered. Residues serine 136–serine 148 show a composition bias toward low complexity.

In terms of assembly, heterodimer with TCF3/isoform E12. In terms of tissue distribution, germ cells. Expressed in the fetal ovary, but not by a range of other tissues. Expression increases across mid-gestation, rising some 40-fold by the time of primordial follicle formation.

The protein resides in the nucleus. In terms of biological role, germline specific transcription factor implicated in postnatal oocyte-specific gene expression. Plays a key regulatory role in the expression of multiple oocyte-specific genes, including those that initiate folliculogenesis and those that encode the zona pellucida (ZP1, ZP2 and ZP3) required for fertilization and early embryonic survival. Essential for oocytes to survive and form primordial follicles. The persistence of FIGLA in adult females suggests that it may regulate additional pathways that are essential for normal ovarian development. Binds to the E-box (5'-CANNTG-3') of the ZPs (ZP1, ZP2, ZP3) promoters. The chain is Factor in the germline alpha (FIGLA) from Homo sapiens (Human).